A 166-amino-acid polypeptide reads, in one-letter code: Protein UL5 (166 aa).

Belongs to the RL11 family. Interacts with host IQGAP1.

Its subcellular location is the host cytoplasm. Its function is as follows. May play a role in rearrangement of cellular cytoskeleton towards an efficient viral assembly and spreading. The polypeptide is Protein UL5 (UL5) (Human cytomegalovirus (strain AD169) (HHV-5)).